Reading from the N-terminus, the 753-residue chain is 5-methyltetrahydropteroyltriglutamate--homocysteine methyltransferase (753 aa).

5-methyltetrahydropteroyltri-L-glutamate contacts are provided by residues Arg-17–Lys-20 and Lys-117. Residues Ile-431–Ser-433 and Glu-484 contribute to the L-homocysteine site. L-methionine-binding positions include Ile-431–Ser-433 and Glu-484. 5-methyltetrahydropteroyltri-L-glutamate contacts are provided by residues Arg-515–Cys-516 and Trp-561. Asp-599 contributes to the L-homocysteine binding site. Asp-599 contacts L-methionine. Residue Glu-605 coordinates 5-methyltetrahydropteroyltri-L-glutamate. Residues His-641, Cys-643, and Glu-665 each coordinate Zn(2+). His-694 acts as the Proton donor in catalysis. A Zn(2+)-binding site is contributed by Cys-726.

The protein belongs to the vitamin-B12 independent methionine synthase family. Requires Zn(2+) as cofactor.

The catalysed reaction is 5-methyltetrahydropteroyltri-L-glutamate + L-homocysteine = tetrahydropteroyltri-L-glutamate + L-methionine. Its pathway is amino-acid biosynthesis; L-methionine biosynthesis via de novo pathway; L-methionine from L-homocysteine (MetE route): step 1/1. Functionally, catalyzes the transfer of a methyl group from 5-methyltetrahydrofolate to homocysteine resulting in methionine formation. This chain is 5-methyltetrahydropteroyltriglutamate--homocysteine methyltransferase, found in Escherichia coli (strain UTI89 / UPEC).